Reading from the N-terminus, the 240-residue chain is Methylthioribulose-1-phosphate dehydratase (240 aa).

Residue Cys99 coordinates substrate. Zn(2+) contacts are provided by His116 and His118. Glu145 acts as the Proton donor/acceptor in catalysis. A Zn(2+)-binding site is contributed by His201.

Belongs to the aldolase class II family. MtnB subfamily. Zn(2+) is required as a cofactor.

Its subcellular location is the cytoplasm. The catalysed reaction is 5-(methylsulfanyl)-D-ribulose 1-phosphate = 5-methylsulfanyl-2,3-dioxopentyl phosphate + H2O. Its pathway is amino-acid biosynthesis; L-methionine biosynthesis via salvage pathway; L-methionine from S-methyl-5-thio-alpha-D-ribose 1-phosphate: step 2/6. In terms of biological role, catalyzes the dehydration of methylthioribulose-1-phosphate (MTRu-1-P) into 2,3-diketo-5-methylthiopentyl-1-phosphate (DK-MTP-1-P). This is Methylthioribulose-1-phosphate dehydratase from Paracoccidioides lutzii (strain ATCC MYA-826 / Pb01) (Paracoccidioides brasiliensis).